The primary structure comprises 432 residues: Enolase (432 aa).

Residue Q167 coordinates (2R)-2-phosphoglycerate. E209 functions as the Proton donor in the catalytic mechanism. Mg(2+)-binding residues include D246, E291, and D318. The (2R)-2-phosphoglycerate site is built by K343, R372, S373, and K394. The Proton acceptor role is filled by K343.

It belongs to the enolase family. As to quaternary structure, component of the RNA degradosome, a multiprotein complex involved in RNA processing and mRNA degradation. The cofactor is Mg(2+).

It is found in the cytoplasm. The protein localises to the secreted. Its subcellular location is the cell surface. It carries out the reaction (2R)-2-phosphoglycerate = phosphoenolpyruvate + H2O. The protein operates within carbohydrate degradation; glycolysis; pyruvate from D-glyceraldehyde 3-phosphate: step 4/5. Its function is as follows. Catalyzes the reversible conversion of 2-phosphoglycerate (2-PG) into phosphoenolpyruvate (PEP). It is essential for the degradation of carbohydrates via glycolysis. The chain is Enolase from Colwellia psychrerythraea (strain 34H / ATCC BAA-681) (Vibrio psychroerythus).